The following is a 607-amino-acid chain: Protease Do-like 2, chloroplastic (607 aa).

The segment at 41-104 (SSNIKRKSSR…LSDFSRDQQT (64 aa)) is disordered. Basic and acidic residues predominate over residues 87–104 (PKKEKKESLSDFSRDQQT). Residues 118-317 (VVKVYCTHTA…LTDYERNGKY (200 aa)) are serine protease. Catalysis depends on charge relay system residues His159, Asp190, and Ser268. A PDZ domain is found at 308-403 (LTDYERNGKY…YLISQKFAGD (96 aa)).

Belongs to the peptidase S1C family.

The protein localises to the plastid. It is found in the chloroplast thylakoid membrane. Serine protease that performs the primary cleavage of the photodamaged D1 protein in plant photosystem II. This chain is Protease Do-like 2, chloroplastic (DEGP2), found in Arabidopsis thaliana (Mouse-ear cress).